Consider the following 314-residue polypeptide: Acetaldehyde dehydrogenase 1 (314 aa).

Residue 16–19 (SGNI) coordinates NAD(+). Cys-134 acts as the Acyl-thioester intermediate in catalysis. Residues 165 to 173 (SAGPGTRAN) and Asn-292 each bind NAD(+).

This sequence belongs to the acetaldehyde dehydrogenase family.

It carries out the reaction acetaldehyde + NAD(+) + CoA = acetyl-CoA + NADH + H(+). This is Acetaldehyde dehydrogenase 1 (mhpF) from Cupriavidus necator (strain ATCC 17699 / DSM 428 / KCTC 22496 / NCIMB 10442 / H16 / Stanier 337) (Ralstonia eutropha).